We begin with the raw amino-acid sequence, 1295 residues long: Phosphoribosylformylglycinamidine synthase (1295 aa).

The tract at residues tryptophan 304 to lysine 326 is disordered. ATP is bound by residues glycine 306–aspartate 317, threonine 385–tyrosine 387, and alanine 677. Residues aspartate 678, glutamate 717, asparagine 721, and aspartate 884 each contribute to the Mg(2+) site. Residues leucine 995–aspartate 1012 show a composition bias toward basic and acidic residues. Residues leucine 995 to leucine 1017 are disordered. Positions valine 1042–glycine 1295 constitute a Glutamine amidotransferase type-1 domain. Cysteine 1135 (nucleophile) is an active-site residue. Catalysis depends on residues histidine 1260 and glutamate 1262.

In the N-terminal section; belongs to the FGAMS family. As to quaternary structure, monomer.

The protein localises to the cytoplasm. The enzyme catalyses N(2)-formyl-N(1)-(5-phospho-beta-D-ribosyl)glycinamide + L-glutamine + ATP + H2O = 2-formamido-N(1)-(5-O-phospho-beta-D-ribosyl)acetamidine + L-glutamate + ADP + phosphate + H(+). It participates in purine metabolism; IMP biosynthesis via de novo pathway; 5-amino-1-(5-phospho-D-ribosyl)imidazole from N(2)-formyl-N(1)-(5-phospho-D-ribosyl)glycinamide: step 1/2. Functionally, phosphoribosylformylglycinamidine synthase involved in the purines biosynthetic pathway. Catalyzes the ATP-dependent conversion of formylglycinamide ribonucleotide (FGAR) and glutamine to yield formylglycinamidine ribonucleotide (FGAM) and glutamate. In Sodalis glossinidius (strain morsitans), this protein is Phosphoribosylformylglycinamidine synthase.